The sequence spans 119 residues: Ribonuclease P protein component (119 aa).

It belongs to the RnpA family. In terms of assembly, consists of a catalytic RNA component (M1 or rnpB) and a protein subunit.

It carries out the reaction Endonucleolytic cleavage of RNA, removing 5'-extranucleotides from tRNA precursor.. Functionally, RNaseP catalyzes the removal of the 5'-leader sequence from pre-tRNA to produce the mature 5'-terminus. It can also cleave other RNA substrates such as 4.5S RNA. The protein component plays an auxiliary but essential role in vivo by binding to the 5'-leader sequence and broadening the substrate specificity of the ribozyme. In Shewanella woodyi (strain ATCC 51908 / MS32), this protein is Ribonuclease P protein component.